The sequence spans 498 residues: MLSSSSLYAAIDLGSNSFHMLVTRETAGSIQTLAKIKRKVRLAAGLDKQNRLSQEAMQRGWQCLQLFSERLQDIPQDQVRVVATATLRLATNADEFLQRAQEILGLPIQVISGEEEARLIYQGVAHTTGGPDARLVVDIGGGSTELATGIGAKTTQLISLPMGCVTWLDRYFSDRNLEAGNFERAENAAREMLRPVAASLREQGWQICVGASGTVQALQEIMVAQGMDEYITLPKLRQLKEHAIQCDKLEELEIDGLTLERALVFPSGLAILLAIFQELDIKTMTLAGGALREGLVYGMLHLPVDQDIRHRTLATLQRRYLLDTEQAKRVSTLADNFLQQVARDWQLDSRCRELLRSACMVHEIGLSIDFRQSPQHAAYLIRHSDLPGFTPAQKKLLATLLQNQINPIDLMPLSQQNALPVNQAQHLCRLLRLAIIFASRRRDDTLPAVRLRVEGEALRLILPAGWLAQHPLRAEMLEQESRWQSYVHWPLMLEEAPA.

It belongs to the GppA/Ppx family. GppA subfamily.

It carries out the reaction guanosine 3'-diphosphate 5'-triphosphate + H2O = guanosine 3',5'-bis(diphosphate) + phosphate + H(+). It participates in purine metabolism; ppGpp biosynthesis; ppGpp from GTP: step 2/2. Its function is as follows. Catalyzes the conversion of pppGpp to ppGpp. Guanosine pentaphosphate (pppGpp) is a cytoplasmic signaling molecule which together with ppGpp controls the 'stringent response', an adaptive process that allows bacteria to respond to amino acid starvation, resulting in the coordinated regulation of numerous cellular activities. This Pectobacterium atrosepticum (strain SCRI 1043 / ATCC BAA-672) (Erwinia carotovora subsp. atroseptica) protein is Guanosine-5'-triphosphate,3'-diphosphate pyrophosphatase.